A 265-amino-acid polypeptide reads, in one-letter code: Polyprenol monophosphomannose synthase (265 aa).

Over residues 1–10 the composition is skewed to basic and acidic residues; that stretch reads MSVPGEREQG. Residues 1–21 are disordered; that stretch reads MSVPGEREQGAGEDPATVRPT.

The protein belongs to the glycosyltransferase 2 family. In terms of assembly, interacts with Lnt (also called Ppm2, AC A0QZ13) upon coexpression in E.coli, which increases the PPM synthase activity of this protein.

Its subcellular location is the cytoplasm. It carries out the reaction a di-trans,poly-cis-dolichyl phosphate + GDP-alpha-D-mannose = a di-trans,poly-cis-dolichyl beta-D-mannosyl phosphate + GDP. In terms of biological role, transfers mannose from GDP-mannose to lipid acceptors to form polyprenol monophosphomannose (PPM); catalytic activity in vitro is enhanced by Lnt (AC A0QZ13). PMM is an alkai-stable sugar donor which adds mannose-phosphate residues to triacylated-PIM2, eventually leading to generation of the cell wall glycolipid lipoglycan modulins lipoarabinomannan (LAM) and lipomannan (LM). This is Polyprenol monophosphomannose synthase from Mycolicibacterium smegmatis (strain ATCC 700084 / mc(2)155) (Mycobacterium smegmatis).